A 187-amino-acid polypeptide reads, in one-letter code: Protein GrpE (187 aa).

The disordered stretch occupies residues 1–38 (MSEEKQTVEQNETEEQEIIEEQAAADEQQEETNESELL). Positions 11–34 (NETEEQEIIEEQAAADEQQEETNE) are enriched in acidic residues.

The protein belongs to the GrpE family. Homodimer.

The protein localises to the cytoplasm. Its function is as follows. Participates actively in the response to hyperosmotic and heat shock by preventing the aggregation of stress-denatured proteins, in association with DnaK and GrpE. It is the nucleotide exchange factor for DnaK and may function as a thermosensor. Unfolded proteins bind initially to DnaJ; upon interaction with the DnaJ-bound protein, DnaK hydrolyzes its bound ATP, resulting in the formation of a stable complex. GrpE releases ADP from DnaK; ATP binding to DnaK triggers the release of the substrate protein, thus completing the reaction cycle. Several rounds of ATP-dependent interactions between DnaJ, DnaK and GrpE are required for fully efficient folding. The chain is Protein GrpE from Bacillus subtilis (strain 168).